Consider the following 169-residue polypeptide: Ribosome maturation factor RimM (169 aa).

In terms of domain architecture, PRC barrel spans 94 to 166; sequence EEGFYDHELE…TATITPPDGL (73 aa).

It belongs to the RimM family. Binds ribosomal protein uS19.

The protein resides in the cytoplasm. In terms of biological role, an accessory protein needed during the final step in the assembly of 30S ribosomal subunit, possibly for assembly of the head region. Essential for efficient processing of 16S rRNA. May be needed both before and after RbfA during the maturation of 16S rRNA. It has affinity for free ribosomal 30S subunits but not for 70S ribosomes. The polypeptide is Ribosome maturation factor RimM (Corynebacterium efficiens (strain DSM 44549 / YS-314 / AJ 12310 / JCM 11189 / NBRC 100395)).